The sequence spans 273 residues: Aquaporin NIP1-4 (273 aa).

The next 2 helical transmembrane spans lie at Leu-59–Val-79 and Val-86–Val-106. The short motif at Asn-115–Ala-117 is the NPA 1 element. A run of 3 helical transmembrane segments spans residues Ala-133–Phe-155, Ser-174–Thr-194, and Ala-198–Ala-218. The short motif at Asn-227–Ala-229 is the NPA 2 element. A helical transmembrane segment spans residues Trp-245 to Ile-265.

It belongs to the MIP/aquaporin (TC 1.A.8) family. NIP (TC 1.A.8.12) subfamily. In terms of tissue distribution, expressed in leaves.

Its subcellular location is the membrane. In terms of biological role, aquaporins facilitate the transport of water and small neutral solutes across cell membranes. The sequence is that of Aquaporin NIP1-4 (NIP1-4) from Oryza sativa subsp. japonica (Rice).